The primary structure comprises 504 residues: Signal recognition particle receptor FtsY (504 aa).

Disordered stretches follow at residues 1–71 and 116–135; these read MFNW…DDYL and ESDQ…TEIT. GTP-binding positions include 308–315, 391–395, and 455–458; these read GVNGAGKT, DTAGR, and TKLD.

It belongs to the GTP-binding SRP family. FtsY subfamily. Part of the signal recognition particle protein translocation system, which is composed of SRP and FtsY.

It localises to the cell inner membrane. The protein resides in the cytoplasm. The enzyme catalyses GTP + H2O = GDP + phosphate + H(+). Functionally, involved in targeting and insertion of nascent membrane proteins into the cytoplasmic membrane. Acts as a receptor for the complex formed by the signal recognition particle (SRP) and the ribosome-nascent chain (RNC). This chain is Signal recognition particle receptor FtsY, found in Synechocystis sp. (strain ATCC 27184 / PCC 6803 / Kazusa).